Consider the following 205-residue polypeptide: Protease (205 aa).

Active-site residues include histidine 55, aspartate 72, and cysteine 122.

This sequence belongs to the peptidase C5 family. Interacts with protease cofactor pVI-C; this interaction is necessary for protease activation.

The protein resides in the virion. The protein localises to the host nucleus. It carries out the reaction Cleaves proteins of the adenovirus and its host cell at two consensus sites: -Yaa-Xaa-Gly-Gly-|-Xaa- and -Yaa-Xaa-Gly-Xaa-|-Gly- (in which Yaa is Met, Ile or Leu, and Xaa is any amino acid).. With respect to regulation, requires DNA and protease cofactor for maximal activation. Inside nascent virions, becomes partially activated by binding to the viral DNA, allowing it to cleave the cofactor that binds to the protease and fully activates it. Actin, like the viral protease cofactor, seems to act as a cofactor in the cleavage of cytokeratin 18 and of actin itself. Its function is as follows. Cleaves viral precursor proteins (pTP, pIIIa, pVI, pVII, pVIII, and pX) inside newly assembled particles giving rise to mature virions. Protease complexed to its cofactor slides along the viral DNA to specifically locate and cleave the viral precursors. Mature virions have a weakened organization compared to the unmature virions, thereby facilitating subsequent uncoating. Without maturation, the particle lacks infectivity and is unable to uncoat. Late in adenovirus infection, in the cytoplasm, may participate in the cytoskeleton destruction. Cleaves host cell cytoskeletal keratins K7 and K18. In Galliformes (FAdV-8), this protein is Protease.